We begin with the raw amino-acid sequence, 334 residues long: DNA-directed RNA polymerase subunit alpha (334 aa).

The tract at residues 1–232 (MIREKLKVST…DLFIPFLHAE (232 aa)) is alpha N-terminal domain (alpha-NTD). Residues 267 to 334 (QKEITLKSIF…NILQIENHFV (68 aa)) form an alpha C-terminal domain (alpha-CTD) region.

This sequence belongs to the RNA polymerase alpha chain family. As to quaternary structure, in plastids the minimal PEP RNA polymerase catalytic core is composed of four subunits: alpha, beta, beta', and beta''. When a (nuclear-encoded) sigma factor is associated with the core the holoenzyme is formed, which can initiate transcription.

Its subcellular location is the plastid. The protein localises to the chloroplast. The enzyme catalyses RNA(n) + a ribonucleoside 5'-triphosphate = RNA(n+1) + diphosphate. Functionally, DNA-dependent RNA polymerase catalyzes the transcription of DNA into RNA using the four ribonucleoside triphosphates as substrates. The polypeptide is DNA-directed RNA polymerase subunit alpha (Pisum sativum (Garden pea)).